Consider the following 344-residue polypeptide: Holliday junction branch migration complex subunit RuvB (344 aa).

Positions 1–10 are enriched in low complexity; it reads MAIQSSSSGS. The tract at residues 1–37 is disordered; the sequence is MAIQSSSSGSKPPAPKRLVAPEATAAEGDGGRDEGLR. The interval 13 to 197 is large ATPase domain (RuvB-L); it reads PAPKRLVAPE…FGLIQRLEFY (185 aa). Residues Leu36, Arg37, Gly78, Lys81, Thr82, Thr83, 144–146, Arg187, Tyr197, and Arg234 each bind ATP; that span reads EDF. Residue Thr82 participates in Mg(2+) binding. The interval 198–268 is small ATPAse domain (RuvB-S); it reads SCSDLEAIVS…VVVEALAMHR (71 aa). The interval 271 to 344 is head domain (RuvB-H); the sequence is GRGLDPSDRR…DAGRAHLEAA (74 aa). DNA-binding residues include Arg326 and Arg331.

The protein belongs to the RuvB family. In terms of assembly, homohexamer. Forms an RuvA(8)-RuvB(12)-Holliday junction (HJ) complex. HJ DNA is sandwiched between 2 RuvA tetramers; dsDNA enters through RuvA and exits via RuvB. An RuvB hexamer assembles on each DNA strand where it exits the tetramer. Each RuvB hexamer is contacted by two RuvA subunits (via domain III) on 2 adjacent RuvB subunits; this complex drives branch migration. In the full resolvosome a probable DNA-RuvA(4)-RuvB(12)-RuvC(2) complex forms which resolves the HJ.

Its subcellular location is the cytoplasm. The catalysed reaction is ATP + H2O = ADP + phosphate + H(+). Functionally, the RuvA-RuvB-RuvC complex processes Holliday junction (HJ) DNA during genetic recombination and DNA repair, while the RuvA-RuvB complex plays an important role in the rescue of blocked DNA replication forks via replication fork reversal (RFR). RuvA specifically binds to HJ cruciform DNA, conferring on it an open structure. The RuvB hexamer acts as an ATP-dependent pump, pulling dsDNA into and through the RuvAB complex. RuvB forms 2 homohexamers on either side of HJ DNA bound by 1 or 2 RuvA tetramers; 4 subunits per hexamer contact DNA at a time. Coordinated motions by a converter formed by DNA-disengaged RuvB subunits stimulates ATP hydrolysis and nucleotide exchange. Immobilization of the converter enables RuvB to convert the ATP-contained energy into a lever motion, pulling 2 nucleotides of DNA out of the RuvA tetramer per ATP hydrolyzed, thus driving DNA branch migration. The RuvB motors rotate together with the DNA substrate, which together with the progressing nucleotide cycle form the mechanistic basis for DNA recombination by continuous HJ branch migration. Branch migration allows RuvC to scan DNA until it finds its consensus sequence, where it cleaves and resolves cruciform DNA. The protein is Holliday junction branch migration complex subunit RuvB of Synechococcus sp. (strain RCC307).